The sequence spans 397 residues: Acetate kinase 1 (397 aa).

Asn8 serves as a coordination point for Mg(2+). Residue Lys15 participates in ATP binding. Arg89 contributes to the substrate binding site. The active-site Proton donor/acceptor is the Asp146. Residues 206 to 210, 281 to 283, and 329 to 333 contribute to the ATP site; these read HLGNG, DFR, and GVGEN. Glu380 is a Mg(2+) binding site.

Belongs to the acetokinase family. As to quaternary structure, homodimer. Mg(2+) serves as cofactor. Requires Mn(2+) as cofactor.

It localises to the cytoplasm. The enzyme catalyses acetate + ATP = acetyl phosphate + ADP. It functions in the pathway metabolic intermediate biosynthesis; acetyl-CoA biosynthesis; acetyl-CoA from acetate: step 1/2. In terms of biological role, catalyzes the formation of acetyl phosphate from acetate and ATP. Can also catalyze the reverse reaction. The chain is Acetate kinase 1 from Listeria monocytogenes serotype 4b (strain F2365).